A 194-amino-acid polypeptide reads, in one-letter code: dITP/XTP pyrophosphatase (194 aa).

8 to 13 (TSNPGK) serves as a coordination point for substrate. Mg(2+) contacts are provided by E38 and D67. The active-site Proton acceptor is D67. Residues S68, 152–155 (FGYD), K175, and 180–181 (HR) each bind substrate.

It belongs to the HAM1 NTPase family. Homodimer. It depends on Mg(2+) as a cofactor.

It carries out the reaction XTP + H2O = XMP + diphosphate + H(+). It catalyses the reaction dITP + H2O = dIMP + diphosphate + H(+). The catalysed reaction is ITP + H2O = IMP + diphosphate + H(+). Pyrophosphatase that catalyzes the hydrolysis of nucleoside triphosphates to their monophosphate derivatives, with a high preference for the non-canonical purine nucleotides XTP (xanthosine triphosphate), dITP (deoxyinosine triphosphate) and ITP. Seems to function as a house-cleaning enzyme that removes non-canonical purine nucleotides from the nucleotide pool, thus preventing their incorporation into DNA/RNA and avoiding chromosomal lesions. This is dITP/XTP pyrophosphatase from Legionella pneumophila (strain Paris).